Reading from the N-terminus, the 125-residue chain is Large ribosomal subunit protein bL12 (125 aa).

This sequence belongs to the bacterial ribosomal protein bL12 family. As to quaternary structure, homodimer. Part of the ribosomal stalk of the 50S ribosomal subunit. Forms a multimeric L10(L12)X complex, where L10 forms an elongated spine to which 2 to 4 L12 dimers bind in a sequential fashion. Binds GTP-bound translation factors.

Its function is as follows. Forms part of the ribosomal stalk which helps the ribosome interact with GTP-bound translation factors. Is thus essential for accurate translation. In Ruthia magnifica subsp. Calyptogena magnifica, this protein is Large ribosomal subunit protein bL12.